We begin with the raw amino-acid sequence, 400 residues long: Tryptophan synthase beta chain (400 aa).

An N6-(pyridoxal phosphate)lysine modification is found at lysine 91.

Belongs to the TrpB family. Tetramer of two alpha and two beta chains. Pyridoxal 5'-phosphate serves as cofactor.

The catalysed reaction is (1S,2R)-1-C-(indol-3-yl)glycerol 3-phosphate + L-serine = D-glyceraldehyde 3-phosphate + L-tryptophan + H2O. Its pathway is amino-acid biosynthesis; L-tryptophan biosynthesis; L-tryptophan from chorismate: step 5/5. Its function is as follows. The beta subunit is responsible for the synthesis of L-tryptophan from indole and L-serine. This is Tryptophan synthase beta chain from Listeria monocytogenes serotype 4a (strain HCC23).